A 218-amino-acid polypeptide reads, in one-letter code: GTP cyclohydrolase 1 (218 aa).

3 residues coordinate Zn(2+): Cys109, His112, and Cys180.

It belongs to the GTP cyclohydrolase I family. Toroid-shaped homodecamer, composed of two pentamers of five dimers.

It carries out the reaction GTP + H2O = 7,8-dihydroneopterin 3'-triphosphate + formate + H(+). It participates in cofactor biosynthesis; 7,8-dihydroneopterin triphosphate biosynthesis; 7,8-dihydroneopterin triphosphate from GTP: step 1/1. This is GTP cyclohydrolase 1 from Aeromonas hydrophila subsp. hydrophila (strain ATCC 7966 / DSM 30187 / BCRC 13018 / CCUG 14551 / JCM 1027 / KCTC 2358 / NCIMB 9240 / NCTC 8049).